The chain runs to 349 residues: Dihydroorotate dehydrogenase (quinone) (349 aa).

FMN is bound by residues 65-69 and Ala89; that span reads AGFDK. Residue Lys69 coordinates substrate. 114–118 provides a ligand contact to substrate; sequence NRMGF. The FMN site is built by Asn143 and Asn176. Asn176 is a substrate binding site. Ser179 functions as the Nucleophile in the catalytic mechanism. Substrate is bound at residue Asn181. FMN contacts are provided by Lys212 and Thr240. 241-242 serves as a coordination point for substrate; it reads NT. Positions 244 to 265 are disordered; the sequence is TERPESLSHPHAGEQGGLSGAP. Basic and acidic residues predominate over residues 245–255; it reads ERPESLSHPHA. FMN is bound by residues Gly263, Gly290, and 311–312; that span reads YT.

It belongs to the dihydroorotate dehydrogenase family. Type 2 subfamily. As to quaternary structure, monomer. The cofactor is FMN.

The protein resides in the cell membrane. It carries out the reaction (S)-dihydroorotate + a quinone = orotate + a quinol. It functions in the pathway pyrimidine metabolism; UMP biosynthesis via de novo pathway; orotate from (S)-dihydroorotate (quinone route): step 1/1. Its function is as follows. Catalyzes the conversion of dihydroorotate to orotate with quinone as electron acceptor. The polypeptide is Dihydroorotate dehydrogenase (quinone) (Halobacterium salinarum (strain ATCC 29341 / DSM 671 / R1)).